The sequence spans 336 residues: Monoacylglycerol lipase ABHD6 (336 aa).

The Extracellular segment spans residues 1 to 8; it reads MDLDVVNM. Residues 9 to 29 form a helical; Signal-anchor for type II membrane protein membrane-spanning segment; it reads FVIAGGTLAIPILAFVASFLL. The Cytoplasmic portion of the chain corresponds to 30–336; the sequence is WPSALIRIYY…VHNTDNKKLN (307 aa). Catalysis depends on Ser-148, which acts as the Nucleophile. Catalysis depends on charge relay system residues Asp-278 and His-306.

It belongs to the AB hydrolase superfamily. As to expression, widely expressed with higher expression in small intestine, liver and brown adipose tissue. In brain, expressed postsynaptically in cortical neurons but not detected in microglia (at protein level).

Its subcellular location is the late endosome membrane. The protein resides in the lysosome membrane. It localises to the mitochondrion membrane. The catalysed reaction is Hydrolyzes glycerol monoesters of long-chain fatty acids.. It carries out the reaction 2-(5Z,8Z,11Z,14Z-eicosatetraenoyl)-glycerol + H2O = glycerol + (5Z,8Z,11Z,14Z)-eicosatetraenoate + H(+). It catalyses the reaction 1-octanoylglycerol + H2O = octanoate + glycerol + H(+). The enzyme catalyses 1-decanoylglycerol + H2O = decanoate + glycerol + H(+). The catalysed reaction is 1-dodecanoylglycerol + H2O = dodecanoate + glycerol + H(+). It carries out the reaction 1-tetradecanoylglycerol + H2O = tetradecanoate + glycerol + H(+). It catalyses the reaction 2-hexadecanoylglycerol + H2O = glycerol + hexadecanoate + H(+). The enzyme catalyses 2-(9Z-octadecenoyl)-glycerol + H2O = glycerol + (9Z)-octadecenoate + H(+). The catalysed reaction is 1-(9Z-octadecenoyl)-glycerol + H2O = glycerol + (9Z)-octadecenoate + H(+). It carries out the reaction 2-(9Z,12Z-octadecadienoyl)-glycerol + H2O = (9Z,12Z)-octadecadienoate + glycerol + H(+). It catalyses the reaction 1-(5Z,8Z,11Z,14Z-eicosatetraenoyl)-glycerol + H2O = glycerol + (5Z,8Z,11Z,14Z)-eicosatetraenoate + H(+). The enzyme catalyses 1-(9Z,12Z-octadecadienoyl)-glycerol + H2O = (9Z,12Z)-octadecadienoate + glycerol + H(+). The catalysed reaction is 3-(9Z-octadecenoyl)-sn-glycero-1-phospho-(3'-(9Z-octadecenoyl)-1'-sn-glycerol) + H2O = 3-(9Z-octadecenoyl)-sn-glycero-1-phospho-(1'-sn-glycerol) + (9Z)-octadecenoate + H(+). It carries out the reaction (S,S)-2-(9Z-octadecenoyl)-sn-glycero-1-phospho-(2'-(9Z-octadecenoyl)-1'-sn-glycerol) + H2O = (S,S)-2-(9Z-octadecenoyl)-sn-glycero-1-phospho-(1'-sn-glycerol) + (9Z)-octadecenoate + H(+). It catalyses the reaction (R,R)-2-(9Z-octadecenoyl)-sn-glycero-3-phospho-(2'-(9Z-octadecenoyl)-3'-sn-glycerol) + H2O = (R,R)-2-(9Z-octadecenoyl)-sn-glycero-3-phospho-(3'-sn-glycerol) + (9Z)-octadecenoate + H(+). In terms of biological role, lipase that preferentially hydrolysis medium-chain saturated monoacylglycerols including 2-arachidonoylglycerol. Through 2-arachidonoylglycerol degradation may regulate endocannabinoid signaling pathways. Also has a lysophosphatidyl lipase activity with a preference for lysophosphatidylglycerol among other lysophospholipids. Also able to degrade bis(monoacylglycero)phosphate (BMP) and constitutes the major enzyme for BMP catabolism. BMP, also known as lysobisphosphatidic acid, is enriched in late endosomes and lysosomes and plays a key role in the formation of intraluminal vesicles and in lipid sorting. The chain is Monoacylglycerol lipase ABHD6 from Mus musculus (Mouse).